The sequence spans 90 residues: Small ribosomal subunit protein bS20 (90 aa).

Basic and acidic residues predominate over residues 1 to 11 (MANIKSSEKDI). Disordered regions lie at residues 1 to 29 (MANIKSSEKDIRRTKRRNAANSQNRSRLR) and 69 to 90 (SKNADRKKSRMAKRLNAVSAAA).

This sequence belongs to the bacterial ribosomal protein bS20 family.

In terms of biological role, binds directly to 16S ribosomal RNA. The chain is Small ribosomal subunit protein bS20 from Leptospira borgpetersenii serovar Hardjo-bovis (strain L550).